A 227-amino-acid polypeptide reads, in one-letter code: MAYPMQLGLQDATSPIMEELLHFHDHTLMIVFLISSLVLYIISLMLTTKLTHTSTMDAQEVETIWTILPAIILIMIALPSLRILYMMDEINNPSLTVKTMGHQWYWSYEYTDYEDLSFDSYMIPTSDLKPGELRLLEVDNRVVLPMEMTVRMLISSEDVLHSWAVPSLGLKTDAVPGRLNQTTLMSTRPGLYYGQCSEICGSNHSFMPIVLELVPLKHFEKWSASML.

The Mitochondrial intermembrane segment spans residues 1-14 (MAYPMQLGLQDATS). A helical membrane pass occupies residues 15-45 (PIMEELLHFHDHTLMIVFLISSLVLYIISLM). The Mitochondrial matrix segment spans residues 46-59 (LTTKLTHTSTMDAQ). Residues 60 to 87 (EVETIWTILPAIILIMIALPSLRILYMM) form a helical membrane-spanning segment. Over 88–227 (DEINNPSLTV…HFEKWSASML (140 aa)) the chain is Mitochondrial intermembrane. 6 residues coordinate Cu cation: His-161, Cys-196, Glu-198, Cys-200, His-204, and Met-207. Residue Glu-198 participates in Mg(2+) binding.

This sequence belongs to the cytochrome c oxidase subunit 2 family. Component of the cytochrome c oxidase (complex IV, CIV), a multisubunit enzyme composed of 14 subunits. The complex is composed of a catalytic core of 3 subunits MT-CO1, MT-CO2 and MT-CO3, encoded in the mitochondrial DNA, and 11 supernumerary subunits COX4I, COX5A, COX5B, COX6A, COX6B, COX6C, COX7A, COX7B, COX7C, COX8 and NDUFA4, which are encoded in the nuclear genome. The complex exists as a monomer or a dimer and forms supercomplexes (SCs) in the inner mitochondrial membrane with NADH-ubiquinone oxidoreductase (complex I, CI) and ubiquinol-cytochrome c oxidoreductase (cytochrome b-c1 complex, complex III, CIII), resulting in different assemblies (supercomplex SCI(1)III(2)IV(1) and megacomplex MCI(2)III(2)IV(2)). Found in a complex with TMEM177, COA6, COX18, COX20, SCO1 and SCO2. Interacts with TMEM177 in a COX20-dependent manner. Interacts with COX20. Interacts with COX16. Requires Cu cation as cofactor.

The protein resides in the mitochondrion inner membrane. The enzyme catalyses 4 Fe(II)-[cytochrome c] + O2 + 8 H(+)(in) = 4 Fe(III)-[cytochrome c] + 2 H2O + 4 H(+)(out). Its function is as follows. Component of the cytochrome c oxidase, the last enzyme in the mitochondrial electron transport chain which drives oxidative phosphorylation. The respiratory chain contains 3 multisubunit complexes succinate dehydrogenase (complex II, CII), ubiquinol-cytochrome c oxidoreductase (cytochrome b-c1 complex, complex III, CIII) and cytochrome c oxidase (complex IV, CIV), that cooperate to transfer electrons derived from NADH and succinate to molecular oxygen, creating an electrochemical gradient over the inner membrane that drives transmembrane transport and the ATP synthase. Cytochrome c oxidase is the component of the respiratory chain that catalyzes the reduction of oxygen to water. Electrons originating from reduced cytochrome c in the intermembrane space (IMS) are transferred via the dinuclear copper A center (CU(A)) of subunit 2 and heme A of subunit 1 to the active site in subunit 1, a binuclear center (BNC) formed by heme A3 and copper B (CU(B)). The BNC reduces molecular oxygen to 2 water molecules using 4 electrons from cytochrome c in the IMS and 4 protons from the mitochondrial matrix. This is Cytochrome c oxidase subunit 2 (MT-CO2) from Damaliscus pygargus phillipsi (Blesbok).